The primary structure comprises 975 residues: Nesprin-3 (975 aa).

The Cytoplasmic segment spans residues Met-1–Arg-925. 2 Spectrin repeats span residues Gln-220 to Gly-325 and Arg-647 to Arg-740. Positions Leu-778–His-798 are disordered. Residues Cys-917–Thr-975 form the KASH domain. Residues Val-926 to Ala-946 traverse the membrane as a helical; Anchor for type IV membrane protein segment. Over Gly-947–Thr-975 the chain is Perinuclear space.

It belongs to the nesprin family. As to quaternary structure, core component of LINC complexes which are composed of inner nuclear membrane SUN domain-containing proteins coupled to outer nuclear membrane KASH domain-containing nesprins. SUN and KASH domain-containing proteins seem to bind each other promiscuously; however, differentially expression of LINC complex constituents can give rise to specific assemblies. Interacts with SUN1 and SUN2; probably forming respective LINC complexes. Interacts with PLEC (via actin-binding domain). Interacts with DST. Interacts with SYNE1. Interacts (via KASH domain) with TOR1A (ATP-bound); the interaction is required for SYNE3 nuclear envelope localization. The disulfid bond with SUN1 or SUN2 is required for stability of the respective LINC complex under tensile forces. Ubiquitous.

It localises to the nucleus outer membrane. The protein resides in the nucleus envelope. The protein localises to the rough endoplasmic reticulum. Its function is as follows. As a component of the LINC (LInker of Nucleoskeleton and Cytoskeleton) complex involved in the connection between the nuclear lamina and the cytoskeleton. The nucleocytoplasmic interactions established by the LINC complex play an important role in the transmission of mechanical forces across the nuclear envelope and in nuclear movement and positioning. Probable anchoring protein which tethers the nucleus to the cytoskeleton by binding PLEC which can associate with the intermediate filament system. Plays a role in the regulation of aortic epithelial cell morphology, and is required for flow-induced centrosome polarization and directional migration in aortic endothelial cells. This is Nesprin-3 (Syne3) from Mus musculus (Mouse).